An 860-amino-acid polypeptide reads, in one-letter code: Leucine--tRNA ligase (860 aa).

The 'HIGH' region motif lies at 42-52 (PYPSGRLHMGH). The 'KMSKS' region signature appears at 619 to 623 (KMSKS). An ATP-binding site is contributed by Lys-622.

Belongs to the class-I aminoacyl-tRNA synthetase family.

Its subcellular location is the cytoplasm. It carries out the reaction tRNA(Leu) + L-leucine + ATP = L-leucyl-tRNA(Leu) + AMP + diphosphate. The chain is Leucine--tRNA ligase from Citrobacter koseri (strain ATCC BAA-895 / CDC 4225-83 / SGSC4696).